The sequence spans 362 residues: Aminomethyltransferase (362 aa).

It belongs to the GcvT family. The glycine cleavage system is composed of four proteins: P, T, L and H.

The enzyme catalyses N(6)-[(R)-S(8)-aminomethyldihydrolipoyl]-L-lysyl-[protein] + (6S)-5,6,7,8-tetrahydrofolate = N(6)-[(R)-dihydrolipoyl]-L-lysyl-[protein] + (6R)-5,10-methylene-5,6,7,8-tetrahydrofolate + NH4(+). Functionally, the glycine cleavage system catalyzes the degradation of glycine. This is Aminomethyltransferase from Pseudothermotoga lettingae (strain ATCC BAA-301 / DSM 14385 / NBRC 107922 / TMO) (Thermotoga lettingae).